The primary structure comprises 285 residues: Putative cuticle collagen 75 (285 aa).

2 triple-helical region regions span residues 87-116 (GRIGITGPDGQPGKDGLPGMPGSPGIPGEL) and 133-261 (GPKG…PGLD). Low complexity predominate over residues 207–231 (PGAPGIPGEEGLSGPTGQPGSPGSI). The tract at residues 207-257 (PGAPGIPGEEGLSGPTGQPGSPGSIGAMGYEGAYGDRGEPGPPGPIGRRGG) is disordered.

Belongs to the cuticular collagen family. Collagen polypeptide chains are complexed within the cuticle by disulfide bonds and other types of covalent cross-links.

Nematode cuticles are composed largely of collagen-like proteins. The cuticle functions both as an exoskeleton and as a barrier to protect the worm from its environment. The sequence is that of Putative cuticle collagen 75 (col-75) from Caenorhabditis elegans.